The following is a 238-amino-acid chain: Transcription factor PCL1 (238 aa).

The segment covering 71-90 (RLRRASSSSSSSFPAFASKG) has biased composition (low complexity). A disordered region spans residues 71 to 119 (RLRRASSSSSSSFPAFASKGAGTGADEAESGGGADGGNGNTNNSSSKRA). Gly residues predominate over residues 100–109 (SGGGADGGNG). A DNA-binding region (myb-like GARP) is located at residues 115 to 174 (SSKRARLVWTPQLHKRFVEVVAHLGMKNAVPKTIMQLMNVEGLTRENVASHLQKYRLYVK).

It localises to the nucleus. Its function is as follows. Transcription factor that is essential for the generation of the circadian clock oscillation. Binds to specific sites on CCA1 promoter leading to CCA1 activation. This is Transcription factor PCL1 (PCL1) from Oryza sativa subsp. japonica (Rice).